We begin with the raw amino-acid sequence, 446 residues long: Maltoporin (446 aa).

An N-terminal signal peptide occupies residues 1–25 (MMITLRKLPLAVAVAAGVMSAQAMA).

It belongs to the porin LamB (TC 1.B.3) family. In terms of assembly, homotrimer formed of three 18-stranded antiparallel beta-barrels, containing three independent channels.

Its subcellular location is the cell outer membrane. It carries out the reaction beta-maltose(in) = beta-maltose(out). Involved in the transport of maltose and maltodextrins. The polypeptide is Maltoporin (Escherichia coli O6:K15:H31 (strain 536 / UPEC)).